Reading from the N-terminus, the 577-residue chain is Arginine--tRNA ligase (577 aa).

The 'HIGH' region motif lies at 122–132 (PNVAKEMHVGH).

It belongs to the class-I aminoacyl-tRNA synthetase family. In terms of assembly, monomer.

The protein localises to the cytoplasm. The catalysed reaction is tRNA(Arg) + L-arginine + ATP = L-arginyl-tRNA(Arg) + AMP + diphosphate. The protein is Arginine--tRNA ligase of Enterobacter sp. (strain 638).